A 367-amino-acid chain; its full sequence is Peptide chain release factor 2 (367 aa).

Gln-251 is subject to N5-methylglutamine.

It belongs to the prokaryotic/mitochondrial release factor family. Methylated by PrmC. Methylation increases the termination efficiency of RF2.

Its subcellular location is the cytoplasm. In terms of biological role, peptide chain release factor 2 directs the termination of translation in response to the peptide chain termination codons UGA and UAA. The protein is Peptide chain release factor 2 of Nautilia profundicola (strain ATCC BAA-1463 / DSM 18972 / AmH).